The sequence spans 445 residues: MAMSELGIQKTSDGTVSRLLNVVESELQAGREKGDPTEKQLQIILEDAPLWQRFKEVTNEMIVTKNGRRMFPVLKISVSGLDPNAMYSLLLDFVPTDSHRWKYVNGEWVPAGKPEVSSHSCVYIHPDSPNFGAHWMKAPISFSKVKLTNKLNGGGQIMLNSLHKYEPQVHIVRVGGAHRMVMNCSFPETQFIAVTAYQNEEITALKIKYNPFAKAFLDAKERNHLKDIPEAVSESQHVAYSHLGGWIFSNPDGVCAAGNANYQYATPLPLSAPHTHHGCEPYPGLRGHRQAPYPSAYMHRNHSPSVNLIESSSNNLQVFSGPDSWTSLSSTPHTSILSVPHTSGPINPGPSPYPCLWTISNSGGGPAGPGPDVHASSPGAFLLGGPAVTSPLSAQAPTSAGVEVLGEPSLTSIAVSTWTAVASHPFSGWGGPGGGGHHSPSSLDS.

Residues 45–218 constitute a DNA-binding region (T-box); the sequence is LEDAPLWQRF…YNPFAKAFLD (174 aa).

The protein localises to the nucleus. Functionally, transcriptional regulator involved in developmental processes. Can activate POMC gene expression and repress the alpha glycoprotein subunit and thyroid-stimulating hormone beta promoters. This Canis lupus familiaris (Dog) protein is T-box transcription factor TBX19.